A 141-amino-acid chain; its full sequence is Aspartate 1-decarboxylase (141 aa).

Serine 25 serves as the catalytic Schiff-base intermediate with substrate; via pyruvic acid. Serine 25 carries the post-translational modification Pyruvic acid (Ser). Residue threonine 57 coordinates substrate. Catalysis depends on tyrosine 58, which acts as the Proton donor. 73–75 (GAA) is a binding site for substrate.

The protein belongs to the PanD family. In terms of assembly, heterooctamer of four alpha and four beta subunits. Pyruvate is required as a cofactor. Is synthesized initially as an inactive proenzyme, which is activated by self-cleavage at a specific serine bond to produce a beta-subunit with a hydroxyl group at its C-terminus and an alpha-subunit with a pyruvoyl group at its N-terminus.

Its subcellular location is the cytoplasm. It catalyses the reaction L-aspartate + H(+) = beta-alanine + CO2. It participates in cofactor biosynthesis; (R)-pantothenate biosynthesis; beta-alanine from L-aspartate: step 1/1. Its function is as follows. Catalyzes the pyruvoyl-dependent decarboxylation of aspartate to produce beta-alanine. The polypeptide is Aspartate 1-decarboxylase (Pseudarthrobacter chlorophenolicus (strain ATCC 700700 / DSM 12829 / CIP 107037 / JCM 12360 / KCTC 9906 / NCIMB 13794 / A6) (Arthrobacter chlorophenolicus)).